We begin with the raw amino-acid sequence, 431 residues long: tRNA (adenine(37)-N6)-methyltransferase (431 aa).

One can recognise a TsaA-like domain in the interval 30–168; that stretch reads TEPIGYLESC…YIADYDSPQN (139 aa). Residues 47 to 49, 90 to 91, arginine 117, leucine 127, and 148 to 151 each bind S-adenosyl-L-methionine; these read PRQ, HK, and IHGT. Disordered stretches follow at residues 167-189 and 201-243; these read QNLE…ATAN and KAQP…DRER. A compositionally biased stretch (basic and acidic residues) spans 207–243; the sequence is STKEKPKCREHRTSDENSQKFRDTSEIQHTLPEDRER.

Belongs to the tRNA methyltransferase O family.

The catalysed reaction is N(6)-L-threonylcarbamoyladenosine(37) in tRNA + S-adenosyl-L-methionine = N(6)-methyl,N(6)-L-threonylcarbamoyladenosine(37) in tRNA + S-adenosyl-L-homocysteine + H(+). Functionally, S-adenosyl-L-methionine-dependent methyltransferase responsible for the addition of the methyl group in the formation of N6-methyl-N6-threonylcarbamoyladenosine at position 37 (m(6)t(6)A37) of the tRNA anticodon loop of tRNA(Ser)(GCU). The methyl group of m(6)t(6)A37 may improve the efficiency of the tRNA decoding ability. May bind to tRNA. This Rattus norvegicus (Rat) protein is tRNA (adenine(37)-N6)-methyltransferase.